The following is a 335-amino-acid chain: Probable deoxyhypusine synthase (335 aa).

The active-site Nucleophile is K308.

Belongs to the deoxyhypusine synthase family. NAD(+) serves as cofactor.

It carries out the reaction [eIF5A protein]-L-lysine + spermidine = [eIF5A protein]-deoxyhypusine + propane-1,3-diamine. Its pathway is protein modification; eIF5A hypusination. Catalyzes the NAD-dependent oxidative cleavage of spermidine and the subsequent transfer of the butylamine moiety of spermidine to the epsilon-amino group of a specific lysine residue of the eIF-5A precursor protein to form the intermediate deoxyhypusine residue. The sequence is that of Probable deoxyhypusine synthase from Thermococcus onnurineus (strain NA1).